The sequence spans 140 residues: FAD synthase (140 aa).

Residues T9 to F10, H14 to H17, N92, and Y119 each bind ATP.

This sequence belongs to the archaeal FAD synthase family. As to quaternary structure, homodimer. A divalent metal cation is required as a cofactor.

The enzyme catalyses FMN + ATP + H(+) = FAD + diphosphate. It functions in the pathway cofactor biosynthesis; FAD biosynthesis; FAD from FMN: step 1/1. Its function is as follows. Catalyzes the transfer of the AMP portion of ATP to flavin mononucleotide (FMN) to produce flavin adenine dinucleotide (FAD) coenzyme. The sequence is that of FAD synthase from Methanocorpusculum labreanum (strain ATCC 43576 / DSM 4855 / Z).